The following is a 37-amino-acid chain: Large ribosomal subunit protein bL36c (37 aa).

This sequence belongs to the bacterial ribosomal protein bL36 family.

The protein resides in the plastid. It is found in the chloroplast. The polypeptide is Large ribosomal subunit protein bL36c (Chloranthus spicatus (Chulantree)).